The sequence spans 488 residues: Zinc metalloproteinase-disintegrin agkistin (488 aa).

The signal sequence occupies residues 1-20; sequence MIQVLLVTICLAVFPYQGSS. Residues 21–195 constitute a propeptide that is removed on maturation; sequence IILESGNVND…NFPPDGRIEF (175 aa). One can recognise a Peptidase M12B domain in the interval 198 to 394; the sequence is RYIELVIVAD…NPLASYCLYN (197 aa). Glutamate 201 lines the Ca(2+) pocket. Asparagine 258 carries N-linked (GlcNAc...) asparagine glycosylation. Aspartate 285 lines the Ca(2+) pocket. 3 disulfide bridges follow: cysteine 309–cysteine 391, cysteine 349–cysteine 373, and cysteine 351–cysteine 356. Histidine 334 lines the Zn(2+) pocket. Glutamate 335 is a catalytic residue. Residues histidine 338 and histidine 344 each coordinate Zn(2+). The Ca(2+) site is built by cysteine 391, asparagine 394, valine 406, asparagine 409, glutamate 413, glutamate 416, and aspartate 419. The Disintegrin domain maps to 404–488; the sequence is PPVCGNYYLE…AGCPRNPSHA (85 aa). 7 disulfide bridges follow: cysteine 407-cysteine 426, cysteine 418-cysteine 436, cysteine 420-cysteine 431, cysteine 430-cysteine 453, cysteine 444-cysteine 450, cysteine 449-cysteine 474, and cysteine 462-cysteine 481. Positions 466 to 468 match the Cell attachment site motif; sequence RGD.

This sequence belongs to the venom metalloproteinase (M12B) family. P-II subfamily. P-IIb sub-subfamily. As to quaternary structure, monomer. Zn(2+) serves as cofactor. As to expression, expressed by the venom gland.

It is found in the secreted. Inhibits ADP-induced human platelet aggregation, inhibits bovine aortic endothelial cells (BAEC) migration, has anti-angiogenic activity and induces BAEC and human micro-vascular endothelial cell (HMEC) apoptosis. The metalloproteinase domain may act in hemorrhage. The protein is Zinc metalloproteinase-disintegrin agkistin of Gloydius halys (Chinese water mocassin).